Consider the following 179-residue polypeptide: Adenine phosphoribosyltransferase (179 aa).

This sequence belongs to the purine/pyrimidine phosphoribosyltransferase family. As to quaternary structure, homodimer.

It localises to the cytoplasm. It catalyses the reaction AMP + diphosphate = 5-phospho-alpha-D-ribose 1-diphosphate + adenine. It participates in purine metabolism; AMP biosynthesis via salvage pathway; AMP from adenine: step 1/1. Catalyzes a salvage reaction resulting in the formation of AMP, that is energically less costly than de novo synthesis. The polypeptide is Adenine phosphoribosyltransferase (Dinoroseobacter shibae (strain DSM 16493 / NCIMB 14021 / DFL 12)).